We begin with the raw amino-acid sequence, 133 residues long: Small ribosomal subunit protein uS8 (133 aa).

This sequence belongs to the universal ribosomal protein uS8 family. In terms of assembly, part of the 30S ribosomal subunit. Contacts proteins S5 and S12.

Its function is as follows. One of the primary rRNA binding proteins, it binds directly to 16S rRNA central domain where it helps coordinate assembly of the platform of the 30S subunit. The chain is Small ribosomal subunit protein uS8 from Deinococcus geothermalis (strain DSM 11300 / CIP 105573 / AG-3a).